The chain runs to 162 residues: Serine-protein kinase RsbW (162 aa).

It belongs to the anti-sigma-factor family.

It catalyses the reaction L-seryl-[protein] + ATP = O-phospho-L-seryl-[protein] + ADP + H(+). The enzyme catalyses L-threonyl-[protein] + ATP = O-phospho-L-threonyl-[protein] + ADP + H(+). Functionally, negative regulator of sigma-B activity. Phosphorylates and inactivates its specific antagonist protein, RsbV. Upon phosphorylation of RsbV, RsbW is released and binds to sigma-B, thereby blocking its ability to form an RNA polymerase holoenzyme (E-sigma-B). The sequence is that of Serine-protein kinase RsbW from Bacillus pumilus (strain SAFR-032).